The sequence spans 224 residues: Deoxyribose-phosphate aldolase (224 aa).

The active-site Proton donor/acceptor is the aspartate 94. Lysine 158 serves as the catalytic Schiff-base intermediate with acetaldehyde. Catalysis depends on lysine 187, which acts as the Proton donor/acceptor.

It belongs to the DeoC/FbaB aldolase family. DeoC type 1 subfamily. As to quaternary structure, homodimer.

The protein localises to the cytoplasm. The catalysed reaction is 2-deoxy-D-ribose 5-phosphate = D-glyceraldehyde 3-phosphate + acetaldehyde. With respect to regulation, activated by citrate. Inhibited by NaBH(4). Activity is independent of divalent metal cations. Its function is as follows. Catalyzes a reversible aldol reaction between acetaldehyde and D-glyceraldehyde 3-phosphate to generate 2-deoxy-D-ribose 5-phosphate. Could be involved in pentose biosynthesis. This is Deoxyribose-phosphate aldolase from Thermococcus kodakarensis (strain ATCC BAA-918 / JCM 12380 / KOD1) (Pyrococcus kodakaraensis (strain KOD1)).